We begin with the raw amino-acid sequence, 156 residues long: Small ribosomal subunit protein uS7 (156 aa).

The protein belongs to the universal ribosomal protein uS7 family. In terms of assembly, part of the 30S ribosomal subunit. Contacts proteins S9 and S11.

Its function is as follows. One of the primary rRNA binding proteins, it binds directly to 16S rRNA where it nucleates assembly of the head domain of the 30S subunit. Is located at the subunit interface close to the decoding center, probably blocks exit of the E-site tRNA. This chain is Small ribosomal subunit protein uS7, found in Micrococcus luteus (strain ATCC 4698 / DSM 20030 / JCM 1464 / CCM 169 / CCUG 5858 / IAM 1056 / NBRC 3333 / NCIMB 9278 / NCTC 2665 / VKM Ac-2230) (Micrococcus lysodeikticus).